A 323-amino-acid polypeptide reads, in one-letter code: MENCPLVSVIVCAYNAEQYIDESISSIINQTYENLEIIVINDGSTDLTLSHLEEISKLDKRIKIISNKYNLGFINSLNIGLGCFSGKYFARMDADDIAKPSWIEKIVTYLEKNDHITAMGSYLEIIVEKECGIIGSQYKTGDIWKNPLLHNDICEAMLFYNPIHNNTMIMRANVYREHKLIFNKDYPYAEDYKFWSEVSRLGCLANYPEALVKYRLHGNQTSSVYNHEQNETAKKIKRENITYYLNKIGIDIKVINSVSLLEIYHVDKSNKVLKSILYEMYMSLDKYTITSLLHFIKYHLELFDLKQNLKIIKKFIRKINVIF.

The protein belongs to the glycosyltransferase 2 family.

This is an uncharacterized protein from Haemophilus influenzae (strain ATCC 51907 / DSM 11121 / KW20 / Rd).